A 325-amino-acid chain; its full sequence is NADH-ubiquinone oxidoreductase chain 1 (325 aa).

Transmembrane regions (helical) follow at residues 5–25, 79–99, 105–125, 144–164, 177–197, 237–257, 263–283, and 302–322; these read VPAE…FLVL, VATF…YGMV, IGLL…IIAG, MVPY…CVGS, IWSG…RLAE, ILMS…ILDL, IPGS…YIWV, and VFLP…VTFQ.

This sequence belongs to the complex I subunit 1 family.

It is found in the mitochondrion inner membrane. The enzyme catalyses a ubiquinone + NADH + 5 H(+)(in) = a ubiquinol + NAD(+) + 4 H(+)(out). In terms of biological role, core subunit of the mitochondrial membrane respiratory chain NADH dehydrogenase (Complex I) that is believed to belong to the minimal assembly required for catalysis. Complex I functions in the transfer of electrons from NADH to the respiratory chain. The immediate electron acceptor for the enzyme is believed to be ubiquinone. The sequence is that of NADH-ubiquinone oxidoreductase chain 1 (ND1) from Petunia hybrida (Petunia).